Here is a 737-residue protein sequence, read N- to C-terminus: Procollagen-lysine,2-oxoglutarate 5-dioxygenase 2 (737 aa).

A signal peptide spans 1–25 (MGDRGARPGRLMPMLALLSWAAGLG). N-linked (GlcNAc...) asparagine glycosylation is found at asparagine 63 and asparagine 209. Position 320 is a phosphothreonine (threonine 320). Phosphotyrosine is present on tyrosine 323. Residues asparagine 365 and asparagine 522 are each glycosylated (N-linked (GlcNAc...) asparagine). Residues 644 to 737 (KGFALLNFVV…RYIAVSFIDP (94 aa)) enclose the Fe2OG dioxygenase domain. Positions 666 and 668 each coordinate Fe cation. An N-linked (GlcNAc...) asparagine glycan is attached at asparagine 696. N6-succinyllysine is present on lysine 704. Histidine 718 provides a ligand contact to Fe cation. A glycan (N-linked (GlcNAc...) asparagine) is linked at asparagine 725. Residue arginine 728 is part of the active site.

As to quaternary structure, homodimer. Requires Fe(2+) as cofactor. L-ascorbate serves as cofactor. Is highly expressed in the heart, lung, kidney, eye, ovary and placenta.

The protein resides in the rough endoplasmic reticulum membrane. The enzyme catalyses L-lysyl-[collagen] + 2-oxoglutarate + O2 = (5R)-5-hydroxy-L-lysyl-[collagen] + succinate + CO2. Its function is as follows. Forms hydroxylysine residues in -Xaa-Lys-Gly- sequences in collagens. These hydroxylysines serve as sites of attachment for carbohydrate units and are essential for the stability of the intermolecular collagen cross-links. The chain is Procollagen-lysine,2-oxoglutarate 5-dioxygenase 2 (Plod2) from Mus musculus (Mouse).